A 753-amino-acid polypeptide reads, in one-letter code: 5-methyltetrahydropteroyltriglutamate--homocysteine methyltransferase (753 aa).

5-methyltetrahydropteroyltri-L-glutamate-binding positions include arginine 17–lysine 20 and lysine 117. L-homocysteine is bound by residues isoleucine 431–serine 433 and glutamate 484. L-methionine is bound by residues isoleucine 431–serine 433 and glutamate 484. 5-methyltetrahydropteroyltri-L-glutamate is bound by residues arginine 515 to cysteine 516 and tryptophan 561. Residue aspartate 599 coordinates L-homocysteine. Aspartate 599 is an L-methionine binding site. Residue glutamate 605 participates in 5-methyltetrahydropteroyltri-L-glutamate binding. The Zn(2+) site is built by histidine 641, cysteine 643, and glutamate 665. The Proton donor role is filled by histidine 694. Cysteine 726 contacts Zn(2+).

This sequence belongs to the vitamin-B12 independent methionine synthase family. The cofactor is Zn(2+).

The enzyme catalyses 5-methyltetrahydropteroyltri-L-glutamate + L-homocysteine = tetrahydropteroyltri-L-glutamate + L-methionine. Its pathway is amino-acid biosynthesis; L-methionine biosynthesis via de novo pathway; L-methionine from L-homocysteine (MetE route): step 1/1. In terms of biological role, catalyzes the transfer of a methyl group from 5-methyltetrahydrofolate to homocysteine resulting in methionine formation. The chain is 5-methyltetrahydropteroyltriglutamate--homocysteine methyltransferase from Shigella sonnei (strain Ss046).